The primary structure comprises 247 residues: Serine/threonine-protein phosphatase 2A activator (247 aa).

Belongs to the PTPA-type PPIase family.

Its subcellular location is the cytoplasm. It catalyses the reaction [protein]-peptidylproline (omega=180) = [protein]-peptidylproline (omega=0). PPIases accelerate the folding of proteins. It catalyzes the cis-trans isomerization of proline imidic peptide bonds in oligopeptides. Acts as a regulatory subunit for PP2A-like phosphatases modulating their activity or substrate specificity, probably by inducing a conformational change in the catalytic subunit, a direct target of the PPIase. Can reactivate inactive phosphatase PP2A-phosphatase methylesterase complexes (PP2Ai) in presence of ATP and Mg(2+) by dissociating the inactive form from the complex. This chain is Serine/threonine-protein phosphatase 2A activator, found in Encephalitozoon cuniculi (strain GB-M1) (Microsporidian parasite).